The chain runs to 1197 residues: ATP-dependent helicase/nuclease subunit A (1197 aa).

The UvrD-like helicase ATP-binding domain maps to 2-458; it reads RQWTKEQQAA…IDLAKNFRSR (457 aa). 23–30 is a binding site for ATP; that stretch reads AAAGSGKT. The region spanning 485 to 774 is the UvrD-like helicase C-terminal domain; that stretch reads RAALYQGTEF…RIMSIHKSKG (290 aa).

The protein belongs to the helicase family. AddA subfamily. In terms of assembly, heterodimer of AddA and AddB/RexB. It depends on Mg(2+) as a cofactor.

The enzyme catalyses Couples ATP hydrolysis with the unwinding of duplex DNA by translocating in the 3'-5' direction.. The catalysed reaction is ATP + H2O = ADP + phosphate + H(+). The heterodimer acts as both an ATP-dependent DNA helicase and an ATP-dependent, dual-direction single-stranded exonuclease. Recognizes the chi site generating a DNA molecule suitable for the initiation of homologous recombination. The AddA nuclease domain is required for chi fragment generation; this subunit has the helicase and 3' -&gt; 5' nuclease activities. The polypeptide is ATP-dependent helicase/nuclease subunit A (Alkaliphilus oremlandii (strain OhILAs) (Clostridium oremlandii (strain OhILAs))).